Consider the following 237-residue polypeptide: Aspartate/glutamate leucyltransferase (237 aa).

This sequence belongs to the R-transferase family. Bpt subfamily.

The protein localises to the cytoplasm. It carries out the reaction N-terminal L-glutamyl-[protein] + L-leucyl-tRNA(Leu) = N-terminal L-leucyl-L-glutamyl-[protein] + tRNA(Leu) + H(+). The enzyme catalyses N-terminal L-aspartyl-[protein] + L-leucyl-tRNA(Leu) = N-terminal L-leucyl-L-aspartyl-[protein] + tRNA(Leu) + H(+). Its function is as follows. Functions in the N-end rule pathway of protein degradation where it conjugates Leu from its aminoacyl-tRNA to the N-termini of proteins containing an N-terminal aspartate or glutamate. This is Aspartate/glutamate leucyltransferase from Shewanella amazonensis (strain ATCC BAA-1098 / SB2B).